The following is a 110-amino-acid chain: U-scoloptoxin(16)-Er6a (110 aa).

Positions 1–26 are cleaved as a signal peptide; that stretch reads MTSTRKLSVSCLIVFMVSSLIAVSSG.

It belongs to the scoloptoxin-16 family. In terms of processing, contains 4 disulfide bonds. In terms of tissue distribution, expressed by the venom gland.

Its subcellular location is the secreted. The chain is U-scoloptoxin(16)-Er6a from Ethmostigmus rubripes (Giant centipede).